Reading from the N-terminus, the 513-residue chain is Putative zinc finger CCCH domain-containing protein 51 (513 aa).

The segment at 155-180 (SMPRNSPNAGRNLVGHPHSSSKSSSK) is disordered. Residues 170 to 180 (HPHSSSKSSSK) are compositionally biased toward low complexity. Residues 176-204 (KSSSKPCHFHFFRGYCKKGVNCQFFHGSV) form a C3H1-type zinc finger. Residues 218–299 (SLSKLDMEIR…HGQYHVVLVE (82 aa)) form the HTH OST-type domain. One can recognise an RRM domain in the interval 325-411 (NQIYMTFPVH…SELRMTWLKS (87 aa)).

The sequence is that of Putative zinc finger CCCH domain-containing protein 51 from Oryza sativa subsp. japonica (Rice).